A 257-amino-acid polypeptide reads, in one-letter code: Zinc transporter ZupT (257 aa).

3 helical membrane passes run 5-25 (LILT…GVLG), 32-52 (VLAF…LMEM), and 61-81 (GMSP…YFGL). Residues asparagine 120 and glutamate 123 each contribute to the Fe(2+) site. Residues glutamate 123 and histidine 148 each contribute to the Zn(2+) site. Fe(2+) is bound by residues asparagine 149, glutamate 152, and glutamate 181. Zn(2+) is bound at residue glutamate 152. The next 3 helical transmembrane spans lie at 182–202 (IFGG…IVMA), 203–223 (AIMA…LMPL), and 236–256 (GVLC…TIGI).

The protein belongs to the ZIP transporter (TC 2.A.5) family. ZupT subfamily.

The protein localises to the cell inner membrane. It catalyses the reaction Zn(2+)(in) = Zn(2+)(out). Mediates zinc uptake. May also transport other divalent cations. In Salmonella arizonae (strain ATCC BAA-731 / CDC346-86 / RSK2980), this protein is Zinc transporter ZupT.